The primary structure comprises 432 residues: Glutamyl-tRNA reductase (432 aa).

Residues 49–52, Ser101, 106–108, and Gln112 contribute to the substrate site; these read TCNR and EPQ. Catalysis depends on Cys50, which acts as the Nucleophile. 181–186 contacts NADP(+); that stretch reads GAGETI. The interval 407–432 is disordered; sequence FPEKPGYQHPPIATPIVRTDDADPAP.

This sequence belongs to the glutamyl-tRNA reductase family. Homodimer.

It carries out the reaction (S)-4-amino-5-oxopentanoate + tRNA(Glu) + NADP(+) = L-glutamyl-tRNA(Glu) + NADPH + H(+). The protein operates within porphyrin-containing compound metabolism; protoporphyrin-IX biosynthesis; 5-aminolevulinate from L-glutamyl-tRNA(Glu): step 1/2. In terms of biological role, catalyzes the NADPH-dependent reduction of glutamyl-tRNA(Glu) to glutamate 1-semialdehyde (GSA). The chain is Glutamyl-tRNA reductase from Xanthomonas oryzae pv. oryzae (strain PXO99A).